Reading from the N-terminus, the 249-residue chain is Tumor necrosis factor ligand superfamily member 12 (249 aa).

Residues 1–21 (MAARRSQRRRGRRGEPGTALL) lie on the Cytoplasmic side of the membrane. A helical; Signal-anchor for type II membrane protein membrane pass occupies residues 22 to 45 (APLVLSLGLALACLGLLLVVVSLG). The Extracellular portion of the chain corresponds to 46 to 249 (SWATLSAQEP…LTYFGLFQVH (204 aa)). The interval 52–78 (AQEPSQEELTAEDRREPPELNPQTEES) is disordered. The 142-residue stretch at 107-248 (IAAHYEVHPR…FLTYFGLFQV (142 aa)) folds into the THD domain. The N-linked (GlcNAc...) asparagine glycan is linked to N139. Residues C191 and C210 are joined by a disulfide bond.

It belongs to the tumor necrosis factor family. As to quaternary structure, homotrimer. Interacts with the angiogenic factor AGGF1/VG5Q. The soluble form is produced from the membrane form by proteolytic processing. In terms of tissue distribution, widely expressed.

The protein resides in the cell membrane. The protein localises to the secreted. Its function is as follows. Binds to FN14 and possibly also to TNRFSF12/APO3. Weak inducer of apoptosis in some cell types. Mediates NF-kappa-B activation. Promotes angiogenesis and the proliferation of endothelial cells. Also involved in induction of inflammatory cytokines. Promotes IL8 secretion. The sequence is that of Tumor necrosis factor ligand superfamily member 12 (Tnfsf12) from Mus musculus (Mouse).